A 384-amino-acid chain; its full sequence is 4-hydroxy-3-methylbut-2-en-1-yl diphosphate synthase (flavodoxin) (384 aa).

C272, C275, C307, and E314 together coordinate [4Fe-4S] cluster.

Belongs to the IspG family. [4Fe-4S] cluster serves as cofactor.

It carries out the reaction (2E)-4-hydroxy-3-methylbut-2-enyl diphosphate + oxidized [flavodoxin] + H2O + 2 H(+) = 2-C-methyl-D-erythritol 2,4-cyclic diphosphate + reduced [flavodoxin]. The protein operates within isoprenoid biosynthesis; isopentenyl diphosphate biosynthesis via DXP pathway; isopentenyl diphosphate from 1-deoxy-D-xylulose 5-phosphate: step 5/6. Its function is as follows. Converts 2C-methyl-D-erythritol 2,4-cyclodiphosphate (ME-2,4cPP) into 1-hydroxy-2-methyl-2-(E)-butenyl 4-diphosphate. The sequence is that of 4-hydroxy-3-methylbut-2-en-1-yl diphosphate synthase (flavodoxin) from Rhodospirillum rubrum (strain ATCC 11170 / ATH 1.1.1 / DSM 467 / LMG 4362 / NCIMB 8255 / S1).